Consider the following 165-residue polypeptide: Large ribosomal subunit protein uL11A (165 aa).

Position 67 is an N5-methylarginine (arginine 67).

The protein belongs to the universal ribosomal protein uL11 family. In terms of assembly, component of the large ribosomal subunit (LSU). Mature yeast ribosomes consist of a small (40S) and a large (60S) subunit. The 40S small subunit contains 1 molecule of ribosomal RNA (18S rRNA) and at least 33 different proteins. The large 60S subunit contains 3 rRNA molecules (25S, 5.8S and 5S rRNA) and at least 46 different proteins.

The protein localises to the cytoplasm. Its subcellular location is the nucleus. It localises to the nucleolus. In terms of biological role, this protein binds directly to 26S ribosomal RNA. Its function is as follows. Component of the ribosome, a large ribonucleoprotein complex responsible for the synthesis of proteins in the cell. The small ribosomal subunit (SSU) binds messenger RNAs (mRNAs) and translates the encoded message by selecting cognate aminoacyl-transfer RNA (tRNA) molecules. The large subunit (LSU) contains the ribosomal catalytic site termed the peptidyl transferase center (PTC), which catalyzes the formation of peptide bonds, thereby polymerizing the amino acids delivered by tRNAs into a polypeptide chain. The nascent polypeptides leave the ribosome through a tunnel in the LSU and interact with protein factors that function in enzymatic processing, targeting, and the membrane insertion of nascent chains at the exit of the ribosomal tunnel. The protein is Large ribosomal subunit protein uL11A (rpl1201) of Schizosaccharomyces pombe (strain 972 / ATCC 24843) (Fission yeast).